The sequence spans 251 residues: uncharacterized protein (251 aa).

Residues 192–238 form an RING-type zinc finger; that stretch reads CMMCVQRGDERVAITTPYTTDCGHTYCYACIMSRLKLVNNVSCPICK.

The protein resides in the cytoplasm. This is an uncharacterized protein from Schizosaccharomyces pombe (strain 972 / ATCC 24843) (Fission yeast).